The following is a 438-amino-acid chain: Adenosylhomocysteinase (438 aa).

Thr-61, Asp-137, and Glu-162 together coordinate substrate. Residue 163–165 participates in NAD(+) binding; sequence TTT. Positions 192 and 196 each coordinate substrate. Residues Asn-197, 226–231, Glu-249, Asn-284, 305–307, and Asn-352 each bind NAD(+); these read GYGDVG and IGH.

Belongs to the adenosylhomocysteinase family. NAD(+) serves as cofactor.

The protein localises to the cytoplasm. It catalyses the reaction S-adenosyl-L-homocysteine + H2O = L-homocysteine + adenosine. The protein operates within amino-acid biosynthesis; L-homocysteine biosynthesis; L-homocysteine from S-adenosyl-L-homocysteine: step 1/1. Its function is as follows. May play a key role in the regulation of the intracellular concentration of adenosylhomocysteine. In Flavobacterium psychrophilum (strain ATCC 49511 / DSM 21280 / CIP 103535 / JIP02/86), this protein is Adenosylhomocysteinase.